A 207-amino-acid polypeptide reads, in one-letter code: Urease accessory protein UreG (207 aa).

14 to 21 contacts GTP; sequence GPVGSGKT.

This sequence belongs to the SIMIBI class G3E GTPase family. UreG subfamily. As to quaternary structure, homodimer. UreD, UreF and UreG form a complex that acts as a GTP-hydrolysis-dependent molecular chaperone, activating the urease apoprotein by helping to assemble the nickel containing metallocenter of UreC. The UreE protein probably delivers the nickel.

The protein localises to the cytoplasm. Functionally, facilitates the functional incorporation of the urease nickel metallocenter. This process requires GTP hydrolysis, probably effectuated by UreG. The polypeptide is Urease accessory protein UreG (Rhodopseudomonas palustris (strain BisB18)).